The primary structure comprises 182 residues: NADH-quinone oxidoreductase subunit I (182 aa).

4Fe-4S ferredoxin-type domains lie at 52-82 and 92-121; these read LTRD…LQKA and DFFR…LTPD. Positions 62, 65, 68, 72, 101, 104, 107, and 111 each coordinate [4Fe-4S] cluster.

It belongs to the complex I 23 kDa subunit family. In terms of assembly, NDH-1 is composed of 13 different subunits. Subunits NuoA, H, J, K, L, M, N constitute the membrane sector of the complex. It depends on [4Fe-4S] cluster as a cofactor.

It localises to the cell inner membrane. The enzyme catalyses a quinone + NADH + 5 H(+)(in) = a quinol + NAD(+) + 4 H(+)(out). NDH-1 shuttles electrons from NADH, via FMN and iron-sulfur (Fe-S) centers, to quinones in the respiratory chain. The immediate electron acceptor for the enzyme in this species is believed to be ubiquinone. Couples the redox reaction to proton translocation (for every two electrons transferred, four hydrogen ions are translocated across the cytoplasmic membrane), and thus conserves the redox energy in a proton gradient. This chain is NADH-quinone oxidoreductase subunit I, found in Pseudomonas fluorescens (strain Pf0-1).